A 422-amino-acid chain; its full sequence is UDP-N-acetylglucosamine 1-carboxyvinyltransferase (422 aa).

A phosphoenolpyruvate-binding site is contributed by K22 to N23. R94 contributes to the UDP-N-acetyl-alpha-D-glucosamine binding site. Catalysis depends on C118, which acts as the Proton donor. C118 is subject to 2-(S-cysteinyl)pyruvic acid O-phosphothioketal. UDP-N-acetyl-alpha-D-glucosamine-binding positions include R123–L127, D309, and I331.

This sequence belongs to the EPSP synthase family. MurA subfamily.

The protein localises to the cytoplasm. It carries out the reaction phosphoenolpyruvate + UDP-N-acetyl-alpha-D-glucosamine = UDP-N-acetyl-3-O-(1-carboxyvinyl)-alpha-D-glucosamine + phosphate. It functions in the pathway cell wall biogenesis; peptidoglycan biosynthesis. Its function is as follows. Cell wall formation. Adds enolpyruvyl to UDP-N-acetylglucosamine. In Cereibacter sphaeroides (strain ATCC 17025 / ATH 2.4.3) (Rhodobacter sphaeroides), this protein is UDP-N-acetylglucosamine 1-carboxyvinyltransferase.